A 1941-amino-acid polypeptide reads, in one-letter code: Myosin-2 (1941 aa).

The region spanning 33–82 (DAKTSVFVAEPKESFVKGTIQSREGGKVTVKTEGGATLTVKDDQVFPMNP) is the Myosin N-terminal SH3-like domain. A phosphothreonine mark is found at Thr-64 and Thr-69. The Myosin motor domain maps to 86–784 (DKIEDMAMMT…LLGLLEEMRD (699 aa)). An N6,N6,N6-trimethyllysine modification is found at Lys-130. Position 179–186 (179–186 (GESGAGKT)) interacts with ATP. Tyr-389 carries the post-translational modification Phosphotyrosine. Ser-392 carries the phosphoserine modification. Thr-419 carries the post-translational modification Phosphothreonine. Ser-625 carries the phosphoserine modification. Positions 661–683 (LNKLMTNLRSTHPHFVRCIIPNE) are actin-binding. His-759 is modified (pros-methylhistidine). The tract at residues 763-777 (KFGHTKVFFKAGLLG) is actin-binding. The 30-residue stretch at 787 to 816 (LAQLITRTQARCRGFLARVEYQRMVERREA) folds into the IQ domain. Positions 845–1941 (LLKSAETEKE…EVHTKVISEE (1097 aa)) form a coiled coil. Residues Ser-1094 and Ser-1098 each carry the phosphoserine modification. Disordered stretches follow at residues 1128–1149 (IEAERASRAKAEKQRSDLSREL) and 1155–1174 (RLEEAGGATSAQIEMNKKRE). Over residues 1130 to 1149 (AERASRAKAEKQRSDLSREL) the composition is skewed to basic and acidic residues. Phosphoserine is present on residues Ser-1164 and Ser-1239. Thr-1243 bears the Phosphothreonine mark. The residue at position 1245 (Ser-1245) is a Phosphoserine. At Thr-1257 the chain carries Phosphothreonine. Ser-1263 is modified (phosphoserine). Position 1288 is a phosphothreonine (Thr-1288). Ser-1290, Ser-1294, Ser-1305, and Ser-1308 each carry phosphoserine. Thr-1469 bears the Phosphothreonine mark. Ser-1476 is modified (phosphoserine). The residue at position 1494 (Tyr-1494) is a Phosphotyrosine. Position 1497 is a phosphoserine (Ser-1497). Position 1503 is a phosphothreonine (Thr-1503). Phosphoserine is present on Ser-1516. Thr-1519 carries the phosphothreonine modification. 6 positions are modified to phosphoserine: Ser-1556, Ser-1576, Ser-1602, Ser-1605, Ser-1716, and Ser-1728. A phosphothreonine mark is found at Thr-1732 and Thr-1738. Phosphoserine is present on Ser-1741.

It belongs to the TRAFAC class myosin-kinesin ATPase superfamily. Myosin family. Muscle myosin is a hexameric protein that consists of 2 heavy chain subunits (MHC), 2 alkali light chain subunits (MLC) and 2 regulatory light chain subunits (MLC-2). Interacts with GCSAM.

It is found in the cytoplasm. It localises to the myofibril. Its function is as follows. Myosins are actin-based motor molecules with ATPase activity essential for muscle contraction. The polypeptide is Myosin-2 (Homo sapiens (Human)).